A 236-amino-acid polypeptide reads, in one-letter code: tRNA (guanine-N(1)-)-methyltransferase (236 aa).

Residues Gly-110 and 129–134 (LGDFVL) contribute to the S-adenosyl-L-methionine site.

It belongs to the RNA methyltransferase TrmD family. As to quaternary structure, homodimer.

The protein localises to the cytoplasm. It carries out the reaction guanosine(37) in tRNA + S-adenosyl-L-methionine = N(1)-methylguanosine(37) in tRNA + S-adenosyl-L-homocysteine + H(+). Functionally, specifically methylates guanosine-37 in various tRNAs. The protein is tRNA (guanine-N(1)-)-methyltransferase of Clostridium perfringens (strain ATCC 13124 / DSM 756 / JCM 1290 / NCIMB 6125 / NCTC 8237 / Type A).